Here is a 147-residue protein sequence, read N- to C-terminus: Myoglobin (147 aa).

The Globin domain maps to 2 to 141 (HDAELVLKCW…VIGDIDTYYK (140 aa)). Histidine 60 contacts nitrite. Histidine 60 is a binding site for O2. Heme b is bound at residue histidine 89.

It belongs to the globin family. Monomeric.

The protein resides in the cytoplasm. It is found in the sarcoplasm. It catalyses the reaction Fe(III)-heme b-[protein] + nitric oxide + H2O = Fe(II)-heme b-[protein] + nitrite + 2 H(+). The enzyme catalyses H2O2 + AH2 = A + 2 H2O. Monomeric heme protein which primary function is to store oxygen and facilitate its diffusion within muscle tissues. Reversibly binds oxygen through a pentacoordinated heme iron and enables its timely and efficient release as needed during periods of heightened demand. Depending on the oxidative conditions of tissues and cells, and in addition to its ability to bind oxygen, it also has a nitrite reductase activity whereby it regulates the production of bioactive nitric oxide. Under stress conditions, like hypoxia and anoxia, it also protects cells against reactive oxygen species thanks to its pseudoperoxidase activity. This is Myoglobin (mb) from Cyprinus carpio (Common carp).